The chain runs to 834 residues: Inner nuclear membrane protein SRC1 (834 aa).

The tract at residues 68–292 is disordered; that stretch reads DEGIVKMDRP…TANGTGHSTP (225 aa). Residues 77-86 show a composition bias toward low complexity; that stretch reads PSSSPSIASP. A phosphoserine mark is found at Ser78, Ser80, and Ser85. Acidic residues-rich tracts occupy residues 114–127 and 142–153; these read VSND…DDDD and DTDEVDDEEDDV. Residues 154 to 170 show a composition bias toward polar residues; the sequence is ITSSSNKSDTNDFQQNS. At Ser181 the chain carries Phosphoserine. Positions 188 to 198 are enriched in basic and acidic residues; it reads NSKENKIDNKH. Ser203, Ser204, and Ser206 each carry phosphoserine. The span at 243–266 shows a compositional bias: polar residues; that stretch reads IKNTNRKPVSMDNFNDSLTSSGTE. Ser301 is modified (phosphoserine). The interval 307-364 is disordered; the sequence is PQKEVPSTILVPEVEQQEPSQSERTPSLFSSEGSGSESEAPLLPEITTPGPHQPMGNT. Composition is skewed to low complexity over residues 317–329 and 336–345; these read VPEV…SQSE and SSEGSGSESE. Thr394 carries the post-translational modification Phosphothreonine. Position 427 is a phosphoserine (Ser427). 2 helical membrane passes run 455–475 and 708–728; these read LLAL…GLWY and IWLM…LKNY.

It localises to the nucleus inner membrane. Plays a role in sister chromatid separation. In Saccharomyces cerevisiae (strain ATCC 204508 / S288c) (Baker's yeast), this protein is Inner nuclear membrane protein SRC1 (SRC1).